The following is a 1000-amino-acid chain: MPLRLDVKRKLLARSDRVKCVDLHPVETWLLAALYNGNVHIWNYETQTLVKSFEVCDVPVRAAKFVPRKSWVVTGSDDMHIRVFNYNTLERVHQFEAHSDYLRSLVVHPTLPYVISSSDDMLVKMWDWDNKWAMKQSFEGHTHYVMQIAINPKDNNTFATASLDKTVKVWQFGSNVPNFTLEGHEKGVNCVDYYHGGEKPYIISGADDHLVKIWDYQNKTCVQTLDGHAQNVSSVCFHPELPLIITGSEDSTVRLWHANTYRLETTLNYGLERVWCIQAQKGANTIAIGYDEGSVTLKLGREEPAVSMDSSGKILWAKHSEIQQANLKTISTEESEAIQDGERLPLSVKDLGSSEIYPQTLAHSSNGRFVVACGDGEYIVYTAMALRNKDFGQGLEFVWAVDPNMFAVRESATNVKIKKNFKDHKSIRSDMVLEGISGGPLLALRSNNSLCFFDWESAVLVRRIEITSKSIYWSDNGEMVAICGDDSFYVLKYSAEAVANATEVTEDGIEDAFEVIGEQAEAVKTGFWIGDCFIFTTALNRINYYVGGEIVTIAHVDRPLYLLGYMAKESRVYAVDKDLNVISYKLLLSVLEYQTAVMRRDFDTADKVLTTIPKEQRTRVAHFLEKQGFKKQALAVSQDPDHKFDLSVALGDLKTAYDLALQSDSEEKWKALSNAATLKSELLLAGECLGRARDFGGLMLLATCAGSAPLLQKLADDSAAAESHNISFLSSLLLGDIDACLDKLISTGRLPEAAFLARTHAPSRVSSILELWKAKASGHSEKSSRKIGESLADPVKYENLFPGFTQSLKAESFVREISKIPVPASVRVPSAATRNIQEELDEAVASGAVSFTDDGQAVLKNAPRQTETQLKAPPPPSVARQPSPVRQPSPIREPSPIREPEPEEEEEQEEFDDDQQEVHVPANQESADAHGTSKTPDVVLETSRPDIVPPRGSAAPDLVSASSQQSAQDFQDDTQWSDEDFGDAENGDLNMDDLNLDEED.

WD repeat units lie at residues 13–52, 55–94, 97–136, 140–180, 183–224, 227–266, and 351–391; these read ARSDRVKCVDLHPVETWLLAALYNGNVHIWNYETQTLVKS, VCDVPVRAAKFVPRKSWVVTGSDDMHIRVFNYNTLERVHQ, AHSDYLRSLVVHPTLPYVISSSDDMLVKMWDWDNKWAMKQ, GHTH…PNFT, GHEK…CVQT, GHAQNVSSVCFHPELPLIITGSEDSTVRLWHANTYRLETT, and LGSS…NKDF. The tract at residues 863–1000 is disordered; it reads PRQTETQLKA…MDDLNLDEED (138 aa). The span at 901–915 shows a compositional bias: acidic residues; that stretch reads EPEEEEEQEEFDDDQ. Residues 960–969 are compositionally biased toward low complexity; sequence SASSQQSAQD. Over residues 970-1000 the composition is skewed to acidic residues; it reads FQDDTQWSDEDFGDAENGDLNMDDLNLDEED.

It belongs to the WD repeat COPB2 family. Oligomeric complex that consists of at least the alpha, beta, beta', gamma, delta, epsilon and zeta subunits.

The protein resides in the cytoplasm. It is found in the golgi apparatus membrane. It localises to the cytoplasmic vesicle. Its subcellular location is the COPI-coated vesicle membrane. In terms of biological role, the coatomer is a cytosolic protein complex that binds to dilysine motifs and reversibly associates with Golgi non-clathrin-coated vesicles, which further mediate biosynthetic protein transport from the ER, via the Golgi up to the trans Golgi network. Coatomer complex is required for budding from Golgi membranes, and is essential for the retrograde Golgi-to-ER transport of dilysine-tagged proteins. This is Probable coatomer subunit beta' (copb-2) from Caenorhabditis elegans.